Reading from the N-terminus, the 134-residue chain is Prolactin (134 aa).

Cys126 and Cys134 form a disulfide bridge.

Belongs to the somatotropin/prolactin family.

It is found in the secreted. This is Prolactin from Bufo japonicus (Japanese common toad).